A 337-amino-acid polypeptide reads, in one-letter code: Homeobox protein knotted-1-like 4 (337 aa).

Disordered regions lie at residues M1–E56 and F159–E190. Residues P27–S38 are compositionally biased toward low complexity. The region spanning E200–L220 is the ELK domain. The homeobox; TALE-type DNA-binding region spans S221–T284.

It belongs to the TALE/KNOX homeobox family.

The protein resides in the nucleus. This Oryza sativa subsp. japonica (Rice) protein is Homeobox protein knotted-1-like 4 (OSH10).